Here is a 376-residue protein sequence, read N- to C-terminus: Putative F-box/FBD/LRR-repeat protein At5g52460 (376 aa).

The 60-residue stretch at 16-75 (RDEISSLPDDLLIQILLLVPIKDAVGTMILSKRWRYVWTLLPKLEYSDPGDECESVWKFL) folds into the F-box domain. LRR repeat units lie at residues 131–154 (CKTL…VCLP) and 199–224 (FAKV…KFLK). Residues 296–348 (CHGTNQGTVPRCLSAHLDEEFVWHGYRGNEEETQLIRYIFANAKCLKKREIST) form the FBD domain.

In Arabidopsis thaliana (Mouse-ear cress), this protein is Putative F-box/FBD/LRR-repeat protein At5g52460 (EDA41).